A 483-amino-acid polypeptide reads, in one-letter code: GTPase Der (483 aa).

EngA-type G domains lie at phenylalanine 3–arginine 167 and leucine 212–asparagine 387. GTP contacts are provided by residues glycine 9 to serine 16, aspartate 56 to leucine 60, asparagine 119 to glutamate 122, glycine 218 to serine 225, aspartate 265 to methionine 269, and asparagine 330 to aspartate 333. Residues arginine 388–aspartate 472 form the KH-like domain.

This sequence belongs to the TRAFAC class TrmE-Era-EngA-EngB-Septin-like GTPase superfamily. EngA (Der) GTPase family. Associates with the 50S ribosomal subunit.

Its function is as follows. GTPase that plays an essential role in the late steps of ribosome biogenesis. This Brucella melitensis biotype 2 (strain ATCC 23457) protein is GTPase Der.